The chain runs to 197 residues: Nucleoid occlusion factor SlmA (197 aa).

An HTH tetR-type domain is found at 7 to 67 (INRREHILQC…GLIEFIEDAI (61 aa)). Residues 30-49 (TTAKLAAEVGVSEAALYRHF) constitute a DNA-binding region (H-T-H motif).

The protein belongs to the nucleoid occlusion factor SlmA family. Homodimer. Interacts with FtsZ.

The protein localises to the cytoplasm. The protein resides in the nucleoid. Functionally, required for nucleoid occlusion (NO) phenomenon, which prevents Z-ring formation and cell division over the nucleoid. Acts as a DNA-associated cell division inhibitor that binds simultaneously chromosomal DNA and FtsZ, and disrupts the assembly of FtsZ polymers. SlmA-DNA-binding sequences (SBS) are dispersed on non-Ter regions of the chromosome, preventing FtsZ polymerization at these regions. In Shewanella denitrificans (strain OS217 / ATCC BAA-1090 / DSM 15013), this protein is Nucleoid occlusion factor SlmA.